The following is a 522-amino-acid chain: Protein tweety homolog 3 (522 aa).

Residues 1–43 (MAAAISYTPPWWVNLLHRLPHLNLQWESLNGDFRPEDPDYQQS) are Extracellular-facing. A helical transmembrane segment spans residues 44 to 64 (LMLLACVALSCLALDLLFLLF). Residues 65–87 (YSFWFCCRHRKTEENTNADCCCT) lie on the Cytoplasmic side of the membrane. A helical membrane pass occupies residues 88-108 (VWCVIVATLVCSAGIAVGFYG). At 109–211 (NGETSDGIHR…VDLFDWYRWL (103 aa)) the chain is on the extracellular side. Residues glutamate 111 and aspartate 114 each coordinate Ca(2+). Asparagine 127 and asparagine 145 each carry an N-linked (GlcNAc...) asparagine glycan. Residues 212-232 (GYLGLLLFHVFICLLVLFGLI) form a helical membrane-spanning segment. Residues 233-238 (RNSKGT) are Cytoplasmic-facing. The helical transmembrane segment at 239 to 259 (LICVCFLGMMALIISWASMGL) threads the bilayer. Residues 260–386 (ELAVAVGSSD…LTGFCYDGVE (127 aa)) lie on the Extracellular side of the membrane. 2 cysteine pairs are disulfide-bonded: cysteine 271/cysteine 381 and cysteine 299/cysteine 366. N-linked (GlcNAc...) asparagine glycosylation occurs at asparagine 351. A helical transmembrane segment spans residues 387-407 (GLIYLVLFSFVTALMFSSIVC). Residues 408–522 (SVPHTWQQRR…TNRPETDPVH (115 aa)) are Cytoplasmic-facing. Residues 483–522 (QNPRCENTPLIGRESPPPSYTSSMRAKYLATNRPETDPVH) are disordered.

Belongs to the tweety family. As to quaternary structure, homotetramer; disulfide-linked. Forms cis-homodimers in the presence of Ca(2+).

It is found in the cell membrane. The enzyme catalyses chloride(in) = chloride(out). The catalysed reaction is L-glutamate(out) = L-glutamate(in). May act as a calcium-independent, swelling-dependent volume-regulated anion channel (VRAC-swell) which plays a pivotal role in the process of regulatory volume decrease (RVD) in the brain through the efflux of anions like chloride and organic osmolytes like glutamate. Probable large-conductance Ca(2+)-activated chloride channel. The protein is Protein tweety homolog 3 (ttyh3) of Xenopus laevis (African clawed frog).